A 264-amino-acid polypeptide reads, in one-letter code: 3-dehydroquinate dehydratase (264 aa).

3-dehydroquinate is bound by residues 50 to 52 (EWR) and Arg86. His148 (proton donor/acceptor) is an active-site residue. Lys175 (schiff-base intermediate with substrate) is an active-site residue. Residues Arg217, Ser236, and Gln240 each contribute to the 3-dehydroquinate site.

The protein belongs to the type-I 3-dehydroquinase family. In terms of assembly, homodimer.

It catalyses the reaction 3-dehydroquinate = 3-dehydroshikimate + H2O. It participates in metabolic intermediate biosynthesis; chorismate biosynthesis; chorismate from D-erythrose 4-phosphate and phosphoenolpyruvate: step 3/7. In terms of biological role, involved in the third step of the chorismate pathway, which leads to the biosynthesis of aromatic amino acids. Catalyzes the cis-dehydration of 3-dehydroquinate (DHQ) and introduces the first double bond of the aromatic ring to yield 3-dehydroshikimate. The sequence is that of 3-dehydroquinate dehydratase from Albidiferax ferrireducens (strain ATCC BAA-621 / DSM 15236 / T118) (Rhodoferax ferrireducens).